A 532-amino-acid chain; its full sequence is 2,3-bisphosphoglycerate-independent phosphoglycerate mutase (532 aa).

Mn(2+) is bound by residues Asp-15 and Ser-65. Catalysis depends on Ser-65, which acts as the Phosphoserine intermediate. Substrate is bound by residues His-126, 156-157 (RD), Arg-188, Arg-194, 258-261 (RPDR), and Lys-331. Residues Asp-398, His-402, Asp-439, His-440, and His-457 each contribute to the Mn(2+) site.

Belongs to the BPG-independent phosphoglycerate mutase family. Monomer. Mn(2+) is required as a cofactor.

The catalysed reaction is (2R)-2-phosphoglycerate = (2R)-3-phosphoglycerate. The protein operates within carbohydrate degradation; glycolysis; pyruvate from D-glyceraldehyde 3-phosphate: step 3/5. Functionally, catalyzes the interconversion of 2-phosphoglycerate and 3-phosphoglycerate. The polypeptide is 2,3-bisphosphoglycerate-independent phosphoglycerate mutase (Rippkaea orientalis (strain PCC 8801 / RF-1) (Cyanothece sp. (strain PCC 8801))).